A 752-amino-acid polypeptide reads, in one-letter code: Cation-transporting P-type ATPase B (752 aa).

The region spanning 15–78 (RRIRLDVLGM…VVEKAGYHAA (64 aa)) is the HMA domain. 2 residues coordinate a metal cation: Cys26 and Cys29. Transmembrane regions (helical) follow at residues 105 to 125 (LLVAAVLFVPLADLSTLFAIV), 132 to 152 (GWGYILTALAAPVVTWAAWPF), 167 to 187 (METLISVGIVAATAWSLSSVF), 201 to 221 (AILNSDSIYLEVAAGVTVFVL), 361 to 381 (IAGVFVPVVFVIAGLAGAAWL), and 390 to 410 (AFSVTLGVLVIACPCALGLAT). Asp446 serves as the catalytic 4-aspartylphosphate intermediate. Helical transmembrane passes span 491–511 (MAAAIVAASPDPGPVNGFVAV) and 714–734 (AIPIAAAGLLNPLIAGAAMAF).

It belongs to the cation transport ATPase (P-type) (TC 3.A.3) family. Type IB subfamily.

Its subcellular location is the cell membrane. It carries out the reaction ATP + H2O = ADP + phosphate + H(+). This Mycobacterium tuberculosis (strain ATCC 25618 / H37Rv) protein is Cation-transporting P-type ATPase B (ctpB).